Consider the following 406-residue polypeptide: MSEKVVLAYSGGLDTSAAVKWLQEKYGMDVIAVTIDVGNEKDFTLIKEKALKVGAKKAYVRDVRKEFAEDYIWKAIKANSMYEGVYPLATALARPLIAKVMVDIAMEEGATAIAHGCTGKGNDQVRFDVGINTLAPHLKIIAPARQWGMTREQTMEYAQKWGIPVPISVKNPFSIDENLWGRSIECGLLEDPWNEPIPEVFAWTRPVEATPDAPEYLEVEFEQGVPVAVNGEKLSPLALIQKVHDIAGLHGVGRIDHVENRLVGIKSREIYEAPAAVVLIAAHQALEAMTLSKSQLRFKQMVEATYSDIIYNGLWFSALRQDLDAFIESSQRFVSGTVRLKLSKGSFRVVGRKSPYSLYHKGMATYDKGDQFDPSSAVGFITLWGLQAKLQAQLQPILEEEKGNKS.

An ATP-binding site is contributed by 8–16 (AYSGGLDTS). Tyr86 is an L-citrulline binding site. Gly116 is a binding site for ATP. 3 residues coordinate L-aspartate: Thr118, Asn122, and Asp123. Asn122 serves as a coordination point for L-citrulline. L-citrulline-binding residues include Arg126, Ser174, Ser183, Glu259, and Tyr271.

The protein belongs to the argininosuccinate synthase family. Type 1 subfamily. As to quaternary structure, homotetramer.

Its subcellular location is the cytoplasm. The catalysed reaction is L-citrulline + L-aspartate + ATP = 2-(N(omega)-L-arginino)succinate + AMP + diphosphate + H(+). The protein operates within amino-acid biosynthesis; L-arginine biosynthesis; L-arginine from L-ornithine and carbamoyl phosphate: step 2/3. The polypeptide is Argininosuccinate synthase (Dehalococcoides mccartyi (strain ATCC BAA-2266 / KCTC 15142 / 195) (Dehalococcoides ethenogenes (strain 195))).